The primary structure comprises 152 residues: uncharacterized protein (152 aa).

Residues 127–152 (EKEKAERKAEKAKKNKKKSSTKTKKK) are disordered. Residues 136–152 (EKAKKNKKKSSTKTKKK) show a composition bias toward basic residues.

It belongs to the mimivirus R546 family.

This is an uncharacterized protein from Sputnik virophage.